Consider the following 315-residue polypeptide: Ribosomal RNA small subunit methyltransferase H (315 aa).

S-adenosyl-L-methionine-binding positions include 37–39 (GGH), aspartate 57, phenylalanine 83, aspartate 105, and glutamine 112. The segment at 296 to 315 (EVKANPRSRSAVMRVAEKVR) is disordered.

It belongs to the methyltransferase superfamily. RsmH family.

The protein localises to the cytoplasm. The catalysed reaction is cytidine(1402) in 16S rRNA + S-adenosyl-L-methionine = N(4)-methylcytidine(1402) in 16S rRNA + S-adenosyl-L-homocysteine + H(+). In terms of biological role, specifically methylates the N4 position of cytidine in position 1402 (C1402) of 16S rRNA. The polypeptide is Ribosomal RNA small subunit methyltransferase H (Stutzerimonas stutzeri (strain A1501) (Pseudomonas stutzeri)).